Here is a 156-residue protein sequence, read N- to C-terminus: Snaclec A5 (156 aa).

An N-terminal signal peptide occupies residues 1-23 (MGRSISVSFGLLVVFLSLSGTGA). Intrachain disulfides connect C27-C38, C55-C154, and C129-C146. One can recognise a C-type lectin domain in the interval 34-155 (HEGHCYKVFN…CGKPYRFTCE (122 aa)).

The protein belongs to the snaclec family. In terms of assembly, heterodimer; disulfide-linked. In terms of tissue distribution, expressed by the venom gland.

It is found in the secreted. In terms of biological role, interferes with one step of hemostasis (modulation of platelet aggregation, or coagulation cascade, for example). The sequence is that of Snaclec A5 from Macrovipera lebetinus (Levantine viper).